Reading from the N-terminus, the 134-residue chain is Small ribosomal subunit protein uS11 (134 aa).

The protein belongs to the universal ribosomal protein uS11 family. In terms of assembly, part of the 30S ribosomal subunit. Interacts with proteins S7 and S18. Binds to IF-3.

Its function is as follows. Located on the platform of the 30S subunit, it bridges several disparate RNA helices of the 16S rRNA. Forms part of the Shine-Dalgarno cleft in the 70S ribosome. The protein is Small ribosomal subunit protein uS11 of Corynebacterium jeikeium (strain K411).